Here is a 291-residue protein sequence, read N- to C-terminus: Co-chaperone protein DjlA (291 aa).

Residues 1–6 (MRYWGK) are Periplasmic-facing. Residues 7 to 31 (LLGLALGIVSSTGIWGMIMGLLMGH) form a helical membrane-spanning segment. The Cytoplasmic segment spans residues 32–291 (WIDRARASRR…ELLKSANQTK (260 aa)). Positions 177–223 (ESPTGQQSRQNQSRQNGKSQQRRNNGYSNGHSYGGQRPPSPLRGPTV) are disordered. The span at 181 to 211 (GQQSRQNQSRQNGKSQQRRNNGYSNGHSYGG) shows a compositional bias: low complexity. The region spanning 225–291 (SACRTLGVRS…ELLKSANQTK (67 aa)) is the J domain.

As to quaternary structure, homodimer.

Its subcellular location is the cell inner membrane. Functionally, regulatory DnaK co-chaperone. Direct interaction between DnaK and DjlA is needed for the induction of the wcaABCDE operon, involved in the synthesis of a colanic acid polysaccharide capsule, possibly through activation of the RcsB/RcsC phosphotransfer signaling pathway. The colanic acid capsule may help the bacterium survive conditions outside the host. In Pectobacterium atrosepticum (strain SCRI 1043 / ATCC BAA-672) (Erwinia carotovora subsp. atroseptica), this protein is Co-chaperone protein DjlA.